A 463-amino-acid chain; its full sequence is O-phospho-L-seryl-tRNA:Cys-tRNA synthase 2 (463 aa).

Pyridoxal 5'-phosphate-binding positions include 154-155 (AR), asparagine 259, and 282-284 (SGH). Lysine 285 is subject to N6-(pyridoxal phosphate)lysine.

This sequence belongs to the SepCysS family. Homodimer. Interacts with SepRS. Requires pyridoxal 5'-phosphate as cofactor.

It catalyses the reaction O-phospho-L-seryl-tRNA(Cys) + hydrogen sulfide + H(+) = L-cysteinyl-tRNA(Cys) + phosphate. Functionally, converts O-phospho-L-seryl-tRNA(Cys) (Sep-tRNA(Cys)) to L-cysteinyl-tRNA(Cys) (Cys-tRNA(Cys)). The sequence is that of O-phospho-L-seryl-tRNA:Cys-tRNA synthase 2 from Methanocella arvoryzae (strain DSM 22066 / NBRC 105507 / MRE50).